A 207-amino-acid chain; its full sequence is Anthranilate synthase component II (207 aa).

In terms of domain architecture, Glutamine amidotransferase type-1 spans 17 to 207; sequence RVLFVDNFDS…DVIRNFLAGL (191 aa). L-glutamine is bound at residue 66 to 68; that stretch reads GPG. C96 acts as the Nucleophile; for GATase activity in catalysis. 146-147 is an L-glutamine binding site; the sequence is SL. Active-site residues include H187 and E189.

As to quaternary structure, tetramer of two components I and two components II.

The enzyme catalyses chorismate + L-glutamine = anthranilate + pyruvate + L-glutamate + H(+). It participates in amino-acid biosynthesis; L-tryptophan biosynthesis; L-tryptophan from chorismate: step 1/5. The protein is Anthranilate synthase component II (trpG1) of Haloarcula marismortui (strain ATCC 43049 / DSM 3752 / JCM 8966 / VKM B-1809) (Halobacterium marismortui).